The sequence spans 179 residues: UPF0303 protein YBR137W (179 aa).

This sequence belongs to the UPF0303 family.

The protein resides in the cytoplasm. In Saccharomyces cerevisiae (strain ATCC 204508 / S288c) (Baker's yeast), this protein is UPF0303 protein YBR137W.